Reading from the N-terminus, the 349-residue chain is MIKRRQTRRIYVGGVSIGDGAPVRVQSMTKTDTRNIKATIRQIKQLELAGCEIVRVAVPDITAAKVLGEIKKRIKIPMIADIHFNYKLALEAIKQGVDGLRINPGNIGAKWKVREVITAAKDRKIPIRIGVNAGSLPKDLIEKYGHPTHEAMVEAAERHIEILEELDFHDIKVSLKASDVMKTVEAYRLFSSKHDYPLHIGITETGPVPEGVVKSSIGIGLLLLEGIGDTIRVSLTDSPVVEVNVAYEILRVTGFREKGVEIISCPTCGRCEVNIKKMVKQVKNALRNVKEPIKVAVMGCSVNGPGEAKEADFGIAGGKGQGIVFVKGKILKTVKETELVNALIEEIRK.

Positions 265, 268, 300, and 307 each coordinate [4Fe-4S] cluster.

This sequence belongs to the IspG family. [4Fe-4S] cluster serves as cofactor.

The catalysed reaction is (2E)-4-hydroxy-3-methylbut-2-enyl diphosphate + oxidized [flavodoxin] + H2O + 2 H(+) = 2-C-methyl-D-erythritol 2,4-cyclic diphosphate + reduced [flavodoxin]. The protein operates within isoprenoid biosynthesis; isopentenyl diphosphate biosynthesis via DXP pathway; isopentenyl diphosphate from 1-deoxy-D-xylulose 5-phosphate: step 5/6. Its function is as follows. Converts 2C-methyl-D-erythritol 2,4-cyclodiphosphate (ME-2,4cPP) into 1-hydroxy-2-methyl-2-(E)-butenyl 4-diphosphate. This is 4-hydroxy-3-methylbut-2-en-1-yl diphosphate synthase (flavodoxin) from Thermodesulfovibrio yellowstonii (strain ATCC 51303 / DSM 11347 / YP87).